Here is a 399-residue protein sequence, read N- to C-terminus: Serine palmitoyltransferase (399 aa).

Pyridoxal 5'-phosphate contacts are provided by residues Gly113 to Phe114, His213, Thr241, and Ser243. An N6-(pyridoxal phosphate)lysine modification is found at Lys244.

Belongs to the class-II pyridoxal-phosphate-dependent aminotransferase family. In terms of assembly, homodimer. Requires pyridoxal 5'-phosphate as cofactor.

It localises to the cytoplasm. It catalyses the reaction L-serine + hexadecanoyl-CoA + H(+) = 3-oxosphinganine + CO2 + CoA. It functions in the pathway lipid metabolism; sphingolipid metabolism. Catalyzes the condensation of L-serine with palmitoyl-CoA (hexadecanoyl-CoA) to produce 3-oxosphinganine. The protein is Serine palmitoyltransferase of Sphingobacterium spiritivorum (Flavobacterium spiritivorum).